The primary structure comprises 257 residues: Short chain dehydrogenase prhI (257 aa).

Residues 7–29 (HVVIITGSSSGIGLAASTLALAS) traverse the membrane as a helical segment. Ile11 serves as a coordination point for NADP(+). Asn50 carries an N-linked (GlcNAc...) asparagine glycan. Asp57 contributes to the NADP(+) binding site. N-linked (GlcNAc...) asparagine glycosylation is found at Asn92 and Asn110. Arg119, Tyr151, Lys155, and Val184 together coordinate NADP(+). The Proton acceptor role is filled by Tyr151. The Lowers pKa of active site Tyr role is filled by Lys155.

The protein belongs to the short-chain dehydrogenases/reductases (SDR) family.

It localises to the membrane. It catalyses the reaction protoaustinoid A + A = protoaustinoid B + AH2. It participates in secondary metabolite biosynthesis; terpenoid biosynthesis. Its function is as follows. Short chain dehydrogenase; part of the gene cluster that mediates the biosynthesis of paraherquonin, a meroterpenoid with a unique, highly congested hexacyclic molecular architecture. The first step of the pathway is the synthesis of 3,5-dimethylorsellinic acid (DMOA) by the polyketide synthase prhL. Synthesis of DMOA is followed by farnesylation by the prenyltransferase prhE, methylesterification by the methyl-transferase prhM, epoxidation of the prenyl chain by the flavin-dependent monooxygenase prhF, and cyclization of the farnesyl moiety by the terpene cyclase prhH, to yield the tetracyclic intermediate, protoaustinoid A. The short chain dehydrogenase prhI then oxidizes the C-3 alcohol group of the terpene cyclase product to transform protoaustinoid A into protoaustinoid B. The FAD-binding monooxygenase prhJ catalyzes the oxidation of protoaustinoid B into preaustinoid A which is further oxidized into preaustinoid A1 by FAD-binding monooxygenase phrK. Finally, prhA leads to berkeleydione via the berkeleyone B intermediate. PrhA is a multifunctional dioxygenase that first desaturates at C5-C6 to form berkeleyone B, followed by rearrangement of the A/B-ring to form the cycloheptadiene moiety in berkeleydione. Berkeleydione serves as the key intermediate for the biosynthesis of paraherquonin as well as many other meroterpenoids. The cytochrome P450 monooxygenases prhB, prhD, and prhN, as well as the isomerase prhC, are probably involved in the late stage of paraherquonin biosynthesis, after the production of berkeleydione. Especially prhC might be a multifunctional enzyme that catalyzes the D-ring expansion via intramolecular methoxy rearrangement, as well as the hydrolysis of the expanded D-ring. This chain is Short chain dehydrogenase prhI, found in Penicillium brasilianum.